Consider the following 258-residue polypeptide: Imidazole glycerol phosphate synthase subunit HisF (258 aa).

Residues Asp11 and Asp130 contribute to the active site.

Belongs to the HisA/HisF family. As to quaternary structure, heterodimer of HisH and HisF.

The protein localises to the cytoplasm. The enzyme catalyses 5-[(5-phospho-1-deoxy-D-ribulos-1-ylimino)methylamino]-1-(5-phospho-beta-D-ribosyl)imidazole-4-carboxamide + L-glutamine = D-erythro-1-(imidazol-4-yl)glycerol 3-phosphate + 5-amino-1-(5-phospho-beta-D-ribosyl)imidazole-4-carboxamide + L-glutamate + H(+). It participates in amino-acid biosynthesis; L-histidine biosynthesis; L-histidine from 5-phospho-alpha-D-ribose 1-diphosphate: step 5/9. Its function is as follows. IGPS catalyzes the conversion of PRFAR and glutamine to IGP, AICAR and glutamate. The HisF subunit catalyzes the cyclization activity that produces IGP and AICAR from PRFAR using the ammonia provided by the HisH subunit. The chain is Imidazole glycerol phosphate synthase subunit HisF from Xanthomonas axonopodis pv. citri (strain 306).